The primary structure comprises 97 residues: Nucleoid-associated protein HPP12_0031 (97 aa).

The protein belongs to the YbaB/EbfC family. As to quaternary structure, homodimer.

It localises to the cytoplasm. The protein localises to the nucleoid. Functionally, binds to DNA and alters its conformation. May be involved in regulation of gene expression, nucleoid organization and DNA protection. This is Nucleoid-associated protein HPP12_0031 from Helicobacter pylori (strain P12).